The sequence spans 346 residues: Methylthioribose-1-phosphate isomerase (346 aa).

Substrate-binding positions include arginine 48–alanine 50, arginine 88, and glutamine 192. The active-site Proton donor is aspartate 233. Asparagine 243 to lysine 244 contributes to the substrate binding site.

It belongs to the eIF-2B alpha/beta/delta subunits family. MtnA subfamily.

The catalysed reaction is 5-(methylsulfanyl)-alpha-D-ribose 1-phosphate = 5-(methylsulfanyl)-D-ribulose 1-phosphate. It functions in the pathway amino-acid biosynthesis; L-methionine biosynthesis via salvage pathway; L-methionine from S-methyl-5-thio-alpha-D-ribose 1-phosphate: step 1/6. Functionally, catalyzes the interconversion of methylthioribose-1-phosphate (MTR-1-P) into methylthioribulose-1-phosphate (MTRu-1-P). The sequence is that of Methylthioribose-1-phosphate isomerase from Alcanivorax borkumensis (strain ATCC 700651 / DSM 11573 / NCIMB 13689 / SK2).